Reading from the N-terminus, the 275-residue chain is Arylamine N-acetyltransferase (275 aa).

C70 functions as the Acyl-thioester intermediate in the catalytic mechanism. Active-site residues include H110 and D127.

This sequence belongs to the arylamine N-acetyltransferase family. Homodimer and homotetramer.

The enzyme catalyses an arylamine + acetyl-CoA = an N-acetylarylamine + CoA. Catalyzes the transfer of the acetyl group from acetyl coenzyme A to the free amino group of arylamines and hydrazines. Substrates include isoniazid, anisidine, and 4-aminoveratrole, and to a much lesser extent, p-aminobenzoic acid. The chain is Arylamine N-acetyltransferase from Mycolicibacterium smegmatis (Mycobacterium smegmatis).